The primary structure comprises 375 residues: MKFWLLLGLLLLHEALEDVAGQHSPKNKRPKEQGENRIKPTNKKAKPKIPKVKDRDSTDSTAKSQSIMMQAMGNGRFQRPAATVSLLAGQTLELRCKGSKVEWSYPAYLDTFKDSRLTVKQSERYGQLTLVNSTAADTGEFSCWEQLCNGYICRRDEAKTGSTYIFFTEKGELFVPSPSYFDVVYLNPDRQAVVPCRVTAPSAKVTLHREFPAKEIPANGTDIVYDMKRGFVYLQPHSDHQGVVYCKAEAGGKSQISVKYQLLYVEVPSGPPSTTILASSNKVRGGDDISVLCTVLGEPDVEVEFRWLFPGQKDERPVTIQDTWRLIHRGLGHTTRISQSVIIVEDFETIDAGYYICTAQNLRGQTTVATTVEFS.

An N-terminal signal peptide occupies residues 1–21 (MKFWLLLGLLLLHEALEDVAG). Positions 20–63 (AGQHSPKNKRPKEQGENRIKPTNKKAKPKIPKVKDRDSTDSTAK) are disordered. Residues 40-50 (PTNKKAKPKIP) show a composition bias toward basic residues. One can recognise an Ig-like C2-type 1 domain in the interval 47–159 (PKIPKVKDRD…GYICRRDEAK (113 aa)). C96 and C143 form a disulfide bridge. The N-linked (GlcNAc...) asparagine glycan is linked to N219. The Ig-like C2-type 2 domain maps to 272 to 375 (PSTTILASSN…TTVATTVEFS (104 aa)). The cysteines at positions 293 and 357 are disulfide-linked.

As to quaternary structure, forms a complex composed of PDGFRL, TNK2 and GRB2.

Its subcellular location is the secreted. The polypeptide is Platelet-derived growth factor receptor-like protein (Pdgfrl) (Mus musculus (Mouse)).